Here is a 204-residue protein sequence, read N- to C-terminus: Ribonuclease HII (204 aa).

The RNase H type-2 domain occupies 1–197 (MILGIDEAGR…KNRILNPKLL (197 aa)). A divalent metal cation-binding residues include aspartate 6, glutamate 7, and aspartate 103.

It belongs to the RNase HII family. Mn(2+) serves as cofactor. The cofactor is Mg(2+).

It is found in the cytoplasm. The catalysed reaction is Endonucleolytic cleavage to 5'-phosphomonoester.. Functionally, endonuclease that specifically degrades the RNA of RNA-DNA hybrids. This is Ribonuclease HII from Helicobacter pylori (strain G27).